We begin with the raw amino-acid sequence, 419 residues long: [Butirosin acyl-carrier protein]--L-glutamate ligase (419 aa).

The ATP-grasp domain occupies 144–345; the sequence is RRLMERNGFN…FVESRVLVFN (202 aa). 174–231 lines the ATP pocket; sequence ISAGFSKCVLKVPYGSSGKGLKVIDNERNFRFLLNYIQNRQTNVDLLLEGWHPHRLSL. Mg(2+) contacts are provided by Asp-298, Glu-312, and Asn-314. Mn(2+)-binding residues include Asp-298, Glu-312, and Asn-314.

In terms of assembly, monomer. It depends on Mg(2+) as a cofactor. Mn(2+) is required as a cofactor.

The catalysed reaction is holo-[BtrI ACP] + L-glutamate + ATP = gamma-L-glutamyl-[BtrI ACP] + ADP + phosphate. It carries out the reaction 4-aminobutanoyl-[BtrI ACP] + L-glutamate + ATP = 4-(gamma-L-glutamylamino)butanoyl-[BtrI ACP] + ADP + phosphate + H(+). It functions in the pathway antibiotic biosynthesis; butirosin biosynthesis. ATP-dependent ligase that catalyzes 2 steps in the biosynthesis of the side chain of the aminoglycoside antibiotics in the biosynthetic pathway of butirosin. Mediates the addition of one molecule of L-glutamate to a dedicated acyl-carrier protein. Following decarboxylation of the product by BtrK, adds a second L-glutamate molecule. The protein is [Butirosin acyl-carrier protein]--L-glutamate ligase (btrJ) of Niallia circulans (Bacillus circulans).